Reading from the N-terminus, the 419-residue chain is Histidine--tRNA ligase (419 aa).

The protein belongs to the class-II aminoacyl-tRNA synthetase family.

The protein localises to the cytoplasm. The catalysed reaction is tRNA(His) + L-histidine + ATP = L-histidyl-tRNA(His) + AMP + diphosphate + H(+). This Pyrobaculum aerophilum (strain ATCC 51768 / DSM 7523 / JCM 9630 / CIP 104966 / NBRC 100827 / IM2) protein is Histidine--tRNA ligase.